The following is a 325-amino-acid chain: Hydroxylase/desaturase poxK (325 aa).

Residues 1-12 (MTATATPVPTVA) show a composition bias toward low complexity. The segment at 1–25 (MTATATPVPTVASHAQDITLPPPPK) is disordered.

This sequence belongs to the asaB hydroxylase/desaturase family.

Its pathway is secondary metabolite biosynthesis. Hydroxylase/desaturase; part of the gene cluster that mediates the biosynthesis of oxaleimides, cytotoxic compounds containing an unusual disubstituted succinimide moiety. The first step of the pathway is provided by the HR-PKS poxF that serves in a new mode of collaborative biosynthesis with the PKS-NRPS poxE, by providing the olefin containing amino acid substrate via the synthesis of an ACP-bound dec-4-enoate. The cytochrome P450 monooxygenase poxM-catalyzed oxidation at the alpha-position creates the enzyme-bound 2-hydroxydec-4-enoyl-ACP thioester, which may be prone to spontaneous hydrolysis to yield 2-hydroxydec-4-enoic acid due to increased electrophilicity of the carbonyl. 2-hydroxydec-4-enoic acid can then be further oxidized by poxM to yield the alpha-ketoacid 2-oxodec-4-enoicacid, which is reductively aminated by the aminotransferase poxL to yield (S,E)-2-aminodec-4-enoic acid. The Hybrid PKS-NRPS synthetase poxE then performs condensation between the octaketide product of its PKS modules and the amino group of (S,E)-2-aminodec-4-enoic acid which is activated and incorporated by the adenylation domain. The resulting aminoacyl product can be cyclized by the Diels-Alderase PoxQ and reductively released by the reductive (R) domain of poxE to yield an aldehyde intermediate. The released aldehyde is then substrate for a Knoevenagel condensation by the hydrolyase poxO followed by an oxidation at the 5-position of the pyrrolidone ring. The presence of the olefin from the amino acid building block allows for migration of the substituted allyl group to occur. This allylic transposition reaction takes place in a conjugate addition, semipinacol-like fashion to yield a succinimide intermediate. Iterative two-electron oxidations of the C7 methyl of the succinimide intermediate to the carboxylic acid can be catalyzed by one of two remaining cytochrome P450 monooxygenasess poxC or poxD to yield oxaleimide A. Subsequent oxidation yields the maleimide scaffold oxaleimide I. Both oxaleimide A and oxaleimide I can undergo oxidative modifications in the decalin ring to yield the series of products oxaleimides B to H. This is Hydroxylase/desaturase poxK from Penicillium oxalicum (strain 114-2 / CGMCC 5302) (Penicillium decumbens).